Reading from the N-terminus, the 472-residue chain is Chromosomal replication initiator protein DnaA (472 aa).

The segment at 1 to 73 (MSNMEHDRWS…LTCWQAELPE (73 aa)) is domain I, interacts with DnaA modulators. The domain II stretch occupies residues 73–128 (EVCRIDLTVRSPMRAAVAKEAAAPVEHRRAEHRPATETRSHATVPASSNHDALGGS). Positions 92–127 (EAAAPVEHRRAEHRPATETRSHATVPASSNHDALGG) are disordered. Residues 97 to 112 (VEHRRAEHRPATETRS) are compositionally biased toward basic and acidic residues. The segment at 129–351 (PLDPRLTFAS…GAINRLLAHS (223 aa)) is domain III, AAA+ region. G176, G178, K179, and T180 together coordinate ATP. The interval 352 to 472 (KLNAQPVTLE…VDSLKRQLQE (121 aa)) is domain IV, binds dsDNA.

Belongs to the DnaA family. As to quaternary structure, oligomerizes as a right-handed, spiral filament on DNA at oriC.

The protein localises to the cytoplasm. In terms of biological role, plays an essential role in the initiation and regulation of chromosomal replication. ATP-DnaA binds to the origin of replication (oriC) to initiate formation of the DNA replication initiation complex once per cell cycle. Binds the DnaA box (a 9 base pair repeat at the origin) and separates the double-stranded (ds)DNA. Forms a right-handed helical filament on oriC DNA; dsDNA binds to the exterior of the filament while single-stranded (ss)DNA is stabiized in the filament's interior. The ATP-DnaA-oriC complex binds and stabilizes one strand of the AT-rich DNA unwinding element (DUE), permitting loading of DNA polymerase. After initiation quickly degrades to an ADP-DnaA complex that is not apt for DNA replication. Binds acidic phospholipids. This chain is Chromosomal replication initiator protein DnaA, found in Rhodopseudomonas palustris (strain HaA2).